The sequence spans 400 residues: Enoyl-[acyl-carrier-protein] reductase [NADH] (400 aa).

Residues 48–53 (GSSSGY), 74–75 (FE), 111–112 (DA), and 139–140 (LA) contribute to the NAD(+) site. Y225 is a binding site for substrate. Y235 serves as the catalytic Proton donor. NAD(+)-binding positions include K244 and 273-275 (VVT).

The protein belongs to the TER reductase family. Monomer.

The catalysed reaction is a 2,3-saturated acyl-[ACP] + NAD(+) = a (2E)-enoyl-[ACP] + NADH + H(+). The protein operates within lipid metabolism; fatty acid biosynthesis. Involved in the final reduction of the elongation cycle of fatty acid synthesis (FAS II). Catalyzes the reduction of a carbon-carbon double bond in an enoyl moiety that is covalently linked to an acyl carrier protein (ACP). This Shewanella oneidensis (strain ATCC 700550 / JCM 31522 / CIP 106686 / LMG 19005 / NCIMB 14063 / MR-1) protein is Enoyl-[acyl-carrier-protein] reductase [NADH].